Here is a 738-residue protein sequence, read N- to C-terminus: MSENHDAIVTDAKTEEAGGCPVAHGRAPHPTQGGGNRQWWPERLNLKILAKNPAVANPLGDGFDYAEAFGSLDLPAVKRDIAEVLTTSQDWWPADFGHYGPLMIRMAWHSAGTYRISDGRGGAGAGQQRFAPLNSWPDNGNLDKARRLLWPVKKKYGQSLSWADLLILTGNVALEQMGFETFGFAGGRADVWEAEEDVYWGPETTWLDDRRYSGDRELENPLGAVQMGLIYVNPEGPNGNPDPIAAARDIRETFGRMAMNDEETVALIAGGHTFGKTHGAGPADHVGDDPEAASMEEQGLGWRNSFGTGKGGDAITSGLEVTWTSTPTRWSNGFFKNLFEFEYELEQSPAGANQWVAKDAPEIVPDAHDPSKKHRPKMLTTDLSLRYDPIYEPISRRFYENPEEFADAFARAWYKLTHRDMGPKSLYLGPEVPEETLLWQDPLPEADGEPVDAEDVATLKTKLLESGLSVSQLVSTAWASASTFRGSDKRGGANGARIRLEPQRGWEVNEPDELAQVLRVLEGIQQEFNSGTKKVSLADLIVLGGTAAVEKAAKEAGFQVQVPFTAGRVDATEEHTDAESFEALEPVADGFRNYLGKGNRLPAEYLLLDRANLLTLSAPEMTVLVGGLRVLGANYQKSPLGAFTRTPGSLTNDFFVNLLDLGVTWKSTSEDQTTFEGRDAATGEVKWAGSRADLVFGSNSELRALAEVYASDDAKEKFVHDFVDAWVKVMNLDRFDLV.

Residues 1–16 show a composition bias toward basic and acidic residues; sequence MSENHDAIVTDAKTEE. The tract at residues 1–37 is disordered; sequence MSENHDAIVTDAKTEEAGGCPVAHGRAPHPTQGGGNR. Positions 108 to 231 form a cross-link, tryptophyl-tyrosyl-methioninium (Trp-Tyr) (with M-257); that stretch reads WHSAGTYRIS…LGAVQMGLIY (124 aa). His109 acts as the Proton acceptor in catalysis. The tryptophyl-tyrosyl-methioninium (Tyr-Met) (with W-108) cross-link spans 231-257; that stretch reads YVNPEGPNGNPDPIAAARDIRETFGRM. A heme b-binding site is contributed by His272.

The protein belongs to the peroxidase family. Peroxidase/catalase subfamily. Homodimer or homotetramer. Requires heme b as cofactor. Formation of the three residue Trp-Tyr-Met cross-link is important for the catalase, but not the peroxidase activity of the enzyme.

The catalysed reaction is H2O2 + AH2 = A + 2 H2O. It carries out the reaction 2 H2O2 = O2 + 2 H2O. Its function is as follows. Bifunctional enzyme with both catalase and broad-spectrum peroxidase activity. In Streptomyces ambofaciens, this protein is Catalase-peroxidase.